The following is a 913-amino-acid chain: DNA repair endonuclease XPF (913 aa).

The helicase-like stretch occupies residues Met-1 to Asp-454. 2 leucine-zipper regions span residues Leu-233–Leu-254 and Leu-270–Leu-298. Lys-289 bears the N6-acetyllysine mark. Positions Gly-453–Ser-476 are enriched in basic and acidic residues. Disordered stretches follow at residues Gly-453–Glu-525 and Val-638–Thr-677. Residues Lys-483 to Glu-488 carry the Nuclear localization signal motif. Acidic residues predominate over residues Glu-500 to Glu-509. Ser-518 carries the post-translational modification Phosphoserine. Basic and acidic residues predominate over residues Val-638–Thr-649. The tract at residues Arg-655 to Phe-810 is nuclease. The 81-residue stretch at Ser-680–Ala-760 folds into the ERCC4 domain. The hhH2, dimerization with ERCC1 stretch occupies residues Thr-834–Tyr-902.

This sequence belongs to the XPF family. In terms of assembly, heterodimer composed of ERCC1 and ERCC4/XPF. Interacts with SLX4/BTBD12; this interaction is direct and links the ERCC1-ERCC4/XPF complex to SLX4, which may coordinate the action of the structure-specific endonuclease during DNA repair. It depends on Mg(2+) as a cofactor.

The protein localises to the nucleus. It localises to the chromosome. Catalytic component of a structure-specific DNA repair endonuclease responsible for the 5-prime incision during DNA repair, and which is essential for nucleotide excision repair (NER) and interstrand cross-link (ICL) repair. This Cricetulus griseus (Chinese hamster) protein is DNA repair endonuclease XPF.